A 286-amino-acid polypeptide reads, in one-letter code: Flagellin FlaB1 (286 aa).

The segment at 231–286 (LDIAAENLQAAESRIRDANIAKQMVEYTKNQVLTQSGTAMLAQANTSAQSILSILR) is required for interaction with FliW.

The protein belongs to the bacterial flagellin family. In terms of assembly, the flagellum consists of an outer layer composed of repeating units of FlaA around a core that contains several antigenically related polypeptides. Interacts via its C-terminus with FliW; a synthetic peptide of residues 229-247 partially blocks binding to FliW.

Its subcellular location is the periplasmic flagellum. It is found in the periplasm. Its function is as follows. Component of the core of the flagella. This chain is Flagellin FlaB1 (flaB1), found in Treponema pallidum (strain Nichols).